The following is a 427-amino-acid chain: Transcription factor MYB98 (427 aa).

Positions 195 to 202 (TRKLSSSS) match the Nuclear localization signal 1 motif. HTH myb-type domains are found at residues 212–267 (KSTL…RPDI) and 268–318 (KKET…RRQF). 2 consecutive DNA-binding regions (H-T-H motif) follow at residues 240-263 (WSHIAQVLPGRIGKQCRERWHNHL) and 291-314 (WAEIAKRLPGRTENSIKNHWNATK). The Nuclear localization signal 2 motif lies at 361 to 368 (NKKKDVVV).

Expressed at high levels in the synergid cells of the female gametophyte, and at lower levels in the endosperm of young seeds and the trichomes of young leaves and sepals.

It localises to the nucleus. Transcription factor that binds to the motif 5'-GTAACNT-3' in the promoter of target genes (e.g. DD11 and DD18) and promotes their expression within synergid cells (e.g. in the filiform apparatus) in ovules. Required for the formation of the filiform apparatus during synergid cell differentiation in the female gametophyte. Involved in pollen tube guidance to the micropyle. In Arabidopsis thaliana (Mouse-ear cress), this protein is Transcription factor MYB98.